Consider the following 170-residue polypeptide: Ribosome maturation factor RimM (170 aa).

The region spanning 98–170 is the PRC barrel domain; sequence EGQYYWADLE…RIELDWDPDF (73 aa).

Belongs to the RimM family. As to quaternary structure, binds ribosomal protein uS19.

Its subcellular location is the cytoplasm. In terms of biological role, an accessory protein needed during the final step in the assembly of 30S ribosomal subunit, possibly for assembly of the head region. Essential for efficient processing of 16S rRNA. May be needed both before and after RbfA during the maturation of 16S rRNA. It has affinity for free ribosomal 30S subunits but not for 70S ribosomes. In Alkalilimnicola ehrlichii (strain ATCC BAA-1101 / DSM 17681 / MLHE-1), this protein is Ribosome maturation factor RimM.